Here is a 155-residue protein sequence, read N- to C-terminus: uncharacterized protein (155 aa).

In terms of domain architecture, HTH asnC-type spans 4-65 (IDEIDEVIVR…VVDPSFFGEF (62 aa)). The segment at residues 23-42 (LTELGRKVGLTASAVKNRIE) is a DNA-binding region (H-T-H motif).

This is an uncharacterized protein from Pyrococcus horikoshii (strain ATCC 700860 / DSM 12428 / JCM 9974 / NBRC 100139 / OT-3).